A 232-amino-acid chain; its full sequence is Ribose-5-phosphate isomerase A (232 aa).

Residues 29 to 32 (TGST), 84 to 87 (DGAD), and 97 to 100 (KGGG) contribute to the substrate site. The Proton acceptor role is filled by Glu-106. Lys-124 lines the substrate pocket.

The protein belongs to the ribose 5-phosphate isomerase family. In terms of assembly, homodimer.

It catalyses the reaction aldehydo-D-ribose 5-phosphate = D-ribulose 5-phosphate. The protein operates within carbohydrate degradation; pentose phosphate pathway; D-ribose 5-phosphate from D-ribulose 5-phosphate (non-oxidative stage): step 1/1. In terms of biological role, catalyzes the reversible conversion of ribose-5-phosphate to ribulose 5-phosphate. This is Ribose-5-phosphate isomerase A from Brucella suis biovar 1 (strain 1330).